We begin with the raw amino-acid sequence, 31 residues long: Cyclotide mra3 (31 aa).

Intrachain disulfides connect Cys-5/Cys-21, Cys-9/Cys-23, and Cys-14/Cys-28.

Post-translationally, this is a cyclic peptide. In terms of processing, contains 3 disulfide bonds.

Functionally, probably participates in a plant defense mechanism. The polypeptide is Cyclotide mra3 (Melicytus ramiflorus (Whitey wood)).